Consider the following 282-residue polypeptide: Tyrosine recombinase XerA (282 aa).

One can recognise a Core-binding (CB) domain in the interval 2–79 (SEPNEVIEEF…ALRAYFRFEG (78 aa)). Positions 95–271 (SLPKALTREE…TVEHLRKAQE (177 aa)) constitute a Tyr recombinase domain. Residues Arg-132, Lys-157, His-223, Arg-226, and His-249 contribute to the active site. Tyr-258 functions as the O-(3'-phospho-DNA)-tyrosine intermediate in the catalytic mechanism.

This sequence belongs to the 'phage' integrase family. XerA subfamily.

It is found in the cytoplasm. Functionally, site-specific tyrosine recombinase, which acts by catalyzing the cutting and rejoining of the recombining DNA molecules. In Thermococcus kodakarensis (strain ATCC BAA-918 / JCM 12380 / KOD1) (Pyrococcus kodakaraensis (strain KOD1)), this protein is Tyrosine recombinase XerA.